Consider the following 220-residue polypeptide: ATP synthase subunit delta (220 aa).

This sequence belongs to the ATPase delta chain family. F-type ATPases have 2 components, F(1) - the catalytic core - and F(0) - the membrane proton channel. F(1) has five subunits: alpha(3), beta(3), gamma(1), delta(1), epsilon(1). F(0) has three main subunits: a(1), b(2) and c(10-14). The alpha and beta chains form an alternating ring which encloses part of the gamma chain. F(1) is attached to F(0) by a central stalk formed by the gamma and epsilon chains, while a peripheral stalk is formed by the delta and b chains.

Its subcellular location is the cell inner membrane. In terms of biological role, f(1)F(0) ATP synthase produces ATP from ADP in the presence of a proton or sodium gradient. F-type ATPases consist of two structural domains, F(1) containing the extramembraneous catalytic core and F(0) containing the membrane proton channel, linked together by a central stalk and a peripheral stalk. During catalysis, ATP synthesis in the catalytic domain of F(1) is coupled via a rotary mechanism of the central stalk subunits to proton translocation. Its function is as follows. This protein is part of the stalk that links CF(0) to CF(1). It either transmits conformational changes from CF(0) to CF(1) or is implicated in proton conduction. In Gluconobacter oxydans (strain 621H) (Gluconobacter suboxydans), this protein is ATP synthase subunit delta.